The primary structure comprises 177 residues: Large ribosomal subunit protein uL6 (177 aa).

Belongs to the universal ribosomal protein uL6 family. Part of the 50S ribosomal subunit.

In terms of biological role, this protein binds to the 23S rRNA, and is important in its secondary structure. It is located near the subunit interface in the base of the L7/L12 stalk, and near the tRNA binding site of the peptidyltransferase center. This Rhodospirillum centenum (strain ATCC 51521 / SW) protein is Large ribosomal subunit protein uL6.